The sequence spans 321 residues: Secreted RxLR effector protein 71 (321 aa).

The N-terminal stretch at 1–23 (MRPTGWRWPVLSLLLVLLPFQAA) is a signal peptide. Residues 84–87 (RSLR) carry the RxLR motif. Asn114 carries an N-linked (GlcNAc...) asparagine glycan. Positions 210–237 (VSLGRDGNGPVRGISSSPTRLTRPRMGG) are disordered.

The protein belongs to the RxLR effector family.

It localises to the secreted. Its subcellular location is the host cell. Its function is as follows. Secreted effector that partially suppresses the host cell death induced by cell death-inducing proteins. The sequence is that of Secreted RxLR effector protein 71 from Plasmopara viticola (Downy mildew of grapevine).